The primary structure comprises 324 residues: Aldo-keto reductase family 1 member A1-A (324 aa).

Residues 10–19 (GQRMPTVGLG), Thr20, Trp21, and Asp44 contribute to the NADP(+) site. The active-site Proton donor is the Tyr49. Residues Ser161, Asn162, Ser210, Leu212, Ser214, Lys262, Ser263, Val264, Thr265, Arg268, Gln271, and Asn272 each coordinate NADP(+).

It belongs to the aldo/keto reductase family.

The protein resides in the cytoplasm. It is found in the cytosol. It localises to the apical cell membrane. The enzyme catalyses a primary alcohol + NADP(+) = an aldehyde + NADPH + H(+). It carries out the reaction S-nitroso-CoA + NADPH + H(+) = sulfinamide-CoA + NADP(+). It catalyses the reaction S-nitrosoglutathione + NADPH + H(+) = S-(hydroxysulfenamide)glutathione + NADP(+). Its function is as follows. Catalyzes the NADPH-dependent reduction of a wide variety of carbonyl-containing compounds to their corresponding alcohols. Displays enzymatic activity towards endogenous metabolites such as aromatic and aliphatic aldehydes, ketones, monosaccharides and bile acids. Acts as an aldehyde-detoxification enzyme. Also acts as an inhibitor of protein S-nitrosylation by mediating degradation of S-nitroso-coenzyme A (S-nitroso-CoA), a cofactor required to S-nitrosylate proteins. Also acts as a S-nitroso-glutathione reductase by catalyzing the NADPH-dependent reduction of S-nitrosoglutathione. Displays no reductase activity towards retinoids. The polypeptide is Aldo-keto reductase family 1 member A1-A (akr1a1a) (Danio rerio (Zebrafish)).